A 574-amino-acid chain; its full sequence is Probable inactive serine/threonine-protein kinase slob2 (574 aa).

Residues 6–26 traverse the membrane as a helical segment; that stretch reads YIIIAAVGGFAILTFIIIVVL. The region spanning 166 to 346 is the Protein kinase domain; it reads YADRGSLRDF…PLHRLTYTSR (181 aa). Residue Asn-358 is glycosylated (N-linked (GlcNAc...) asparagine). Positions 366 to 386 are disordered; that stretch reads SKPNSKDLSQPKLKDLKKQKK. Asn-440, Asn-449, Asn-453, Asn-456, Asn-464, Asn-470, Asn-477, and Asn-483 each carry an N-linked (GlcNAc...) asparagine glycan. The span at 450 to 493 shows a compositional bias: low complexity; the sequence is TTTNTTNTSTSSSLNSSFNSNVSTSYSNATTTTNTTSASSVSPP. The interval 450 to 574 is disordered; that stretch reads TTTNTTNTST…DKSGPLLKKS (125 aa). The span at 494-539 shows a compositional bias: pro residues; it reads ISSPPPPPPPPPPSKSSGPPPPPPPPPKSSGPPPPPPPKSSPPPPA. Residues 546 to 556 are compositionally biased toward low complexity; that stretch reads LLSSIESFSSS.

The protein belongs to the protein kinase superfamily. Ser/Thr protein kinase family.

It localises to the membrane. The sequence is that of Probable inactive serine/threonine-protein kinase slob2 (slob2) from Dictyostelium discoideum (Social amoeba).